Reading from the N-terminus, the 218-residue chain is Adenylate kinase (218 aa).

10-15 (GAGKGT) lines the ATP pocket. The interval 30 to 59 (STGDIFREAIAKGTELGRKVQDIVNSGNLV) is NMP. Residues Thr-31, Arg-36, 57–59 (NLV), 85–88 (GYPR), and Gln-92 contribute to the AMP site. An LID region spans residues 126–163 (TRRVCSKCGKVYNVITLPSKVEGICDDCGGTLIQRDDD). ATP is bound at residue Arg-127. 2 residues coordinate Zn(2+): Cys-130 and Cys-133. Position 136–137 (136–137 (VY)) interacts with ATP. Zn(2+)-binding residues include Cys-150 and Cys-153. Arg-160 and Arg-171 together coordinate AMP. An ATP-binding site is contributed by Lys-199.

It belongs to the adenylate kinase family. In terms of assembly, monomer.

It localises to the cytoplasm. The enzyme catalyses AMP + ATP = 2 ADP. It functions in the pathway purine metabolism; AMP biosynthesis via salvage pathway; AMP from ADP: step 1/1. Catalyzes the reversible transfer of the terminal phosphate group between ATP and AMP. Plays an important role in cellular energy homeostasis and in adenine nucleotide metabolism. This chain is Adenylate kinase, found in Fervidobacterium nodosum (strain ATCC 35602 / DSM 5306 / Rt17-B1).